Consider the following 395-residue polypeptide: Subtilisin-like protease 9 (395 aa).

An N-terminal signal peptide occupies residues 1-20 (MGFFRTLFSFSIFALSLADT). A propeptide spanning residues 21-120 (SKFIGLDDVD…ADRVVKMAAL (100 aa)) is cleaved from the precursor. Residues 36-117 (SYIVVMKGAV…YVEADRVVKM (82 aa)) form the Inhibitor I9 domain. The 268-residue stretch at 128-395 (SWGLGRISHK…RRLLYNGSGA (268 aa)) folds into the Peptidase S8 domain. Residues D160 and H191 each act as charge relay system in the active site. N252 carries an N-linked (GlcNAc...) asparagine glycan. S341 serves as the catalytic Charge relay system. N-linked (GlcNAc...) asparagine glycosylation occurs at N391.

It belongs to the peptidase S8 family.

It is found in the secreted. Secreted subtilisin-like serine protease with keratinolytic activity that contributes to pathogenicity. The polypeptide is Subtilisin-like protease 9 (SUB9) (Arthroderma otae (strain ATCC MYA-4605 / CBS 113480) (Microsporum canis)).